The primary structure comprises 202 residues: Protein-methionine-sulfoxide reductase heme-binding subunit MsrQ (202 aa).

6 helical membrane passes run 8-28, 42-62, 75-95, 110-130, 147-167, and 169-189; these read LAVF…AWIF, LGLG…LQKL, LGLW…VFIL, PYII…ITSN, LVYL…RADL, and EWTL…PSIA.

The protein belongs to the MsrQ family. As to quaternary structure, heterodimer of a catalytic subunit (MsrP) and a heme-binding subunit (MsrQ). Requires FMN as cofactor. Heme b serves as cofactor.

The protein localises to the cell inner membrane. Its function is as follows. Part of the MsrPQ system that repairs oxidized periplasmic proteins containing methionine sulfoxide residues (Met-O), using respiratory chain electrons. Thus protects these proteins from oxidative-stress damage caused by reactive species of oxygen and chlorine generated by the host defense mechanisms. MsrPQ is essential for the maintenance of envelope integrity under bleach stress, rescuing a wide series of structurally unrelated periplasmic proteins from methionine oxidation. MsrQ provides electrons for reduction to the reductase catalytic subunit MsrP, using the quinone pool of the respiratory chain. This is Protein-methionine-sulfoxide reductase heme-binding subunit MsrQ from Pseudomonas aeruginosa (strain UCBPP-PA14).